The sequence spans 447 residues: MTRLFGTDGVRGLANEVLTAPLALKLGAAAAHVLTAEKRVDGRRPVAIVGRDPRVSGEMLAAALSAGMASQGVDVIRVGVIPTPAVAFLTDDYGADMGVMISASHNPMPDNGIKFFSAGGHKLPDHVEDEIERVMDSLPAEGPTGHGVGRVIEEATDAQDRYLEHLKEAVPTSLEGIKIVVDAANGAASVVAPKAYEAAGATVIAIHNKPDSYNINMDCGSTHIDQVQAAVLKHGADLGLAHDGDADRCLAVDKDGNLIDGDQIMAMLAIAMKENGELRKNTLVGTVMSNLGLKIAMDEAGITLRTTKVGDRYVLEDLNAGGFSLGGEQSGHIVLPDHGTTGDGTLTGLSIMARMAETGKSLGELAQAMTVLPQVLINVPVSDKSTIVSHPSVVAAIAEAEAELGSTGRVLLRASGTEELFRVMVEAGDKEQARRIAGRLSAVVAEV.

Catalysis depends on Ser104, which acts as the Phosphoserine intermediate. Mg(2+) contacts are provided by Ser104, Asp243, Asp245, and Asp247. Position 104 is a phosphoserine (Ser104).

Belongs to the phosphohexose mutase family. It depends on Mg(2+) as a cofactor. Activated by phosphorylation.

It catalyses the reaction alpha-D-glucosamine 1-phosphate = D-glucosamine 6-phosphate. Catalyzes the conversion of glucosamine-6-phosphate to glucosamine-1-phosphate. The protein is Phosphoglucosamine mutase of Corynebacterium glutamicum (strain R).